The following is a 383-amino-acid chain: 1-deoxy-D-xylulose 5-phosphate reductoisomerase (383 aa).

NADPH-binding residues include Thr10, Gly11, Ser12, Ile13, Asn38, and Asn121. Lys122 is a binding site for 1-deoxy-D-xylulose 5-phosphate. Glu123 is an NADPH binding site. Asp147 contacts Mn(2+). The 1-deoxy-D-xylulose 5-phosphate site is built by Ser148, Glu149, Ser172, and His195. A Mn(2+)-binding site is contributed by Glu149. Gly201 contacts NADPH. Residues Ser208, Asn213, Lys214, and Glu217 each contribute to the 1-deoxy-D-xylulose 5-phosphate site. Glu217 contacts Mn(2+).

The protein belongs to the DXR family. It depends on Mg(2+) as a cofactor. The cofactor is Mn(2+).

It catalyses the reaction 2-C-methyl-D-erythritol 4-phosphate + NADP(+) = 1-deoxy-D-xylulose 5-phosphate + NADPH + H(+). It participates in isoprenoid biosynthesis; isopentenyl diphosphate biosynthesis via DXP pathway; isopentenyl diphosphate from 1-deoxy-D-xylulose 5-phosphate: step 1/6. Functionally, catalyzes the NADPH-dependent rearrangement and reduction of 1-deoxy-D-xylulose-5-phosphate (DXP) to 2-C-methyl-D-erythritol 4-phosphate (MEP). This Ruthia magnifica subsp. Calyptogena magnifica protein is 1-deoxy-D-xylulose 5-phosphate reductoisomerase.